The following is a 1131-amino-acid chain: ATP-dependent helicase FUN30 (1131 aa).

The interval 1-70 is disordered; it reads MSGSHSNDED…HTSKPLPSGS (70 aa). Over residues 16 to 36 the composition is skewed to polar residues; that stretch reads PETSSPTKVASSSPLKPTSPT. The CUE-like region stretch occupies residues 76–111; the sequence is VNLAREFPDFSQTLVQAVFKSNSFNLQSARERLTRL. A disordered region spans residues 114 to 141; the sequence is QRQNWTWNKNASPKKSETPPPVKKSLPL. Phosphoserine is present on serine 232. Disordered stretches follow at residues 242 to 273 and 327 to 350; these read KYGR…YTES and NDKD…ANES. Residues 250 to 271 are compositionally biased toward acidic residues; it reads NDEEEEESMMTDDDDASGDDYT. The residue at position 369 (serine 369) is a Phosphoserine. A disordered region spans residues 400-533; it reads DLMNLGEDDD…GDDDDDDDDE (134 aa). Acidic residues predominate over residues 405–416; sequence GEDDDDDNDDGN. A compositionally biased stretch (low complexity) spans 417-432; sequence NDNNNSNNNNTAGADA. A compositionally biased stretch (basic and acidic residues) spans 433-442; that stretch reads TSKEKEDTKA. Serine 451 bears the Phosphoserine mark. A compositionally biased stretch (acidic residues) spans 480–533; sequence EDEDDDVDLEAIDDELPQSEHEDDDYEEEDEDYNDEEEDVEYDDGDDDDDDDDE. The 169-residue stretch at 584-752 folds into the Helicase ATP-binding domain; it reads NLLYQNKMSC…MSLLEFIMPN (169 aa). 597–604 serves as a coordination point for ATP; sequence DDMGLGKT. The DEGH box motif lies at 703 to 706; it reads DEGH. The Helicase C-terminal domain occupies 953–1108; sequence ALKKLLKTII…EDKKSQDVLE (156 aa).

This sequence belongs to the SNF2/RAD54 helicase family. In terms of assembly, homodimer.

The protein resides in the nucleus. It is found in the chromosome. It carries out the reaction ATP + H2O = ADP + phosphate + H(+). Functionally, DNA helicase that possesses intrinsic ATP-dependent nucleosome-remodeling activity and is both required for DNA repair and heterochromatin organization. Promotes DNA end resection of double-strand breaks (DSBs) following DNA damage: probably acts by weakening histone DNA interactions in nucleosomes flanking DSBs, facilitating single-stranded DNA (ssDNA) production by the EXO1 and SGS1 machinery. Promotes gene silencing at heterochromatin by regulating the chromatin structure within or around silent loci. Also required for heterochromatin organization at centromeres. In Saccharomyces cerevisiae (strain ATCC 204508 / S288c) (Baker's yeast), this protein is ATP-dependent helicase FUN30 (FUN30).